A 380-amino-acid polypeptide reads, in one-letter code: Putative 8-amino-7-oxononanoate synthase (380 aa).

Arg-22 contributes to the substrate binding site. Pyridoxal 5'-phosphate is bound at residue 109–110 (GY). Residue His-134 participates in substrate binding. Pyridoxal 5'-phosphate is bound by residues Ser-182, 207-210 (DEAH), and 238-241 (TLSK). Position 241 is an N6-(pyridoxal phosphate)lysine (Lys-241). Thr-353 serves as a coordination point for substrate.

The protein belongs to the class-II pyridoxal-phosphate-dependent aminotransferase family. BioF subfamily. Homodimer. Requires pyridoxal 5'-phosphate as cofactor.

The enzyme catalyses 6-carboxyhexanoyl-[ACP] + L-alanine + H(+) = (8S)-8-amino-7-oxononanoate + holo-[ACP] + CO2. Its pathway is cofactor biosynthesis; biotin biosynthesis. Functionally, catalyzes the decarboxylative condensation of pimeloyl-[acyl-carrier protein] and L-alanine to produce 8-amino-7-oxononanoate (AON), [acyl-carrier protein], and carbon dioxide. This chain is Putative 8-amino-7-oxononanoate synthase (bioF), found in Gloeothece citriformis (strain PCC 7424) (Cyanothece sp. (strain PCC 7424)).